We begin with the raw amino-acid sequence, 203 residues long: ATP-dependent Clp protease proteolytic subunit (203 aa).

Serine 107 acts as the Nucleophile in catalysis. Histidine 132 is an active-site residue.

This sequence belongs to the peptidase S14 family. Fourteen ClpP subunits assemble into 2 heptameric rings which stack back to back to give a disk-like structure with a central cavity, resembling the structure of eukaryotic proteasomes.

It is found in the cytoplasm. The enzyme catalyses Hydrolysis of proteins to small peptides in the presence of ATP and magnesium. alpha-casein is the usual test substrate. In the absence of ATP, only oligopeptides shorter than five residues are hydrolyzed (such as succinyl-Leu-Tyr-|-NHMec, and Leu-Tyr-Leu-|-Tyr-Trp, in which cleavage of the -Tyr-|-Leu- and -Tyr-|-Trp bonds also occurs).. In terms of biological role, cleaves peptides in various proteins in a process that requires ATP hydrolysis. Has a chymotrypsin-like activity. Plays a major role in the degradation of misfolded proteins. The protein is ATP-dependent Clp protease proteolytic subunit of Shewanella halifaxensis (strain HAW-EB4).